The sequence spans 644 residues: Interleukin-23 receptor (644 aa).

Residues 1–23 form the signal peptide; the sequence is MSHLTLQLHVVIALYVLFRWCHG. At 24-374 the chain is on the extracellular side; that stretch reads GITSINCSGD…PASGNHQDIG (351 aa). 3 N-linked (GlcNAc...) asparagine glycosylation sites follow: N47, N130, and N232. Fibronectin type-III domains follow at residues 127–217 and 219–318; these read APSN…LDDI and IPSA…TSQE. The helical transmembrane segment at 375–395 threads the bilayer; that stretch reads LLSGMVFLAIMLPIFSLIGIF. At 396–644 the chain is on the cytoplasmic side; it reads NRSLRIGIKR…HFSRISLFQK (249 aa).

This sequence belongs to the type I cytokine receptor family. Type 2 subfamily. As to quaternary structure, heterodimer with IL12RB1. In presence of IL23, the heterodimer forms the IL23 receptor. Interacts with JAK2 and in presence of IL23 with STAT3. Post-translationally, phosphorylated in response to IL23. Expressed by Th1, Th2 and dendritic cells.

Its subcellular location is the cell membrane. Its function is as follows. Associates with IL12RB1 to form the interleukin-23 receptor. Binds IL23 and mediates T-cells, NK cells and possibly certain macrophage/myeloid cells stimulation probably through activation of the Jak-Stat signaling cascade. IL23 functions in innate and adaptive immunity and may participate in acute response to infection in peripheral tissues. IL23 may be responsible for autoimmune inflammatory diseases and be important for tumorigenesis. The polypeptide is Interleukin-23 receptor (Il23r) (Mus musculus (Mouse)).